We begin with the raw amino-acid sequence, 217 residues long: MQNDLHLLEGLCRQHGIPVTKNALTLLVRYARLLEAWNLKVNLVSRKEHAPVIVKHVFHSLLIARIHDFKPGETVLDLGTGGGLPGIPLAILFPETSFLLVDSTGKKIAACKAMIKELGLENVIALHSRVEELKGVIFDTVLSRQVAPLEELCAYSARLLKHDGVLICLKGGSLNEEIAEAVLSREKHLGFPASVDQLPIGEIDPMFSEKQIVIARW.

S-adenosyl-L-methionine-binding positions include G79, L84, 102-104 (DST), 130-131 (VE), and R144.

It belongs to the methyltransferase superfamily. RNA methyltransferase RsmG family.

The protein resides in the cytoplasm. Its function is as follows. Specifically methylates the N7 position of a guanine in 16S rRNA. In Chlorobaculum tepidum (strain ATCC 49652 / DSM 12025 / NBRC 103806 / TLS) (Chlorobium tepidum), this protein is Ribosomal RNA small subunit methyltransferase G.